The following is a 522-amino-acid chain: MALTEGISELLLSKPVVLGLAACALLFLIGRAFEPTVDALEPPMLRPSIPIFGHFYSMMKDQEAFFKRLDKKYHMPIATVPILKYKMYAITDPILVQSAYCNKNLSFTPFAINGAQKVTGFDDDYHKVLMETNVLPEYFKSLYDGTTAQHIHQLNVTSLKHVSQHINSIQENGMTIDNTYLWLRNLMTVATCEALYGPDNPIRSDSLVEDIWTFETGLAYLFFHIFNSKTLQRTKEARRRIQLALGKWCTNMRQDDERVSAYIRNRVGILRNYGVEGQKLGDIEVGLIHVPTSNSIPTLFWFFMHVFTRPDVVEQMRAEVEHIVQRGPDETVTVNIDDILERCPLMISAYREASRLCNGFTCNRIVMEETTITDRHGRSYLLKKGSSVKMPAGVMHASQEVWGEDAAVFRADRFLDKGLTSEQAKLRRAALTPFGGGAHMCPGRNFATAEIYGFMTALLLGYNVEPVDGKWDAFKPPPMATCPQSTSVCKPEDEASVCGTRLIRRSGWEGAQWKFVSGKVTE.

A helical transmembrane segment spans residues 10–30 (LLLSKPVVLGLAACALLFLIG). N-linked (GlcNAc...) asparagine glycosylation is found at N104 and N155. A heme-binding site is contributed by C441.

It belongs to the cytochrome P450 family. Heme serves as cofactor.

It localises to the membrane. Its pathway is secondary metabolite biosynthesis. Cytochrome P450 monooxygenase; part of the gene cluster that mediates the biosynthesis of the lipopeptide fusaristatin A. Fusaristatin A consists of a polyketide chain linked to three amino acid residues glutamine (Gln), dehydroalanine (dehydro-Ala), and beta-aminoisobutyric acid. The biosynthesis starts with formation of a linear polyketide chain by the highly reducing polyketide synthase PKS6. The gene cluster does not contain an acyl-CoA ligase or an acyl-transferase, and it is therefore predicted that the polyketide is transferred directly to the nonribosomal peptide synthetase NRPS7. Modules 1-3 from NRPS7 incorporate dehydro-Ala, Gln, and beta-aminoisobutyric acid in the compound, which is released by cyclization. The beta-aminoisobutyric acid units are most likely not freely available to the NRPS, but can be synthesized from thymine, which requires a dehydrogenase, a monooxygenase, and an aminotransferase. The fusaristatin A cluster contains a cytochrome P450 monooxygenase (FGSG_08207) and an aminotransferase (FGSG_17085), which theoretically can perform two of the enzymatic steps. The enzymes may however also be involved in biosynthesis of dehydroalanine or modification of the polyketide. The dehydro-Ala residue can be a result of cyclization, where serine is dehydrated. The last gene of the cluster encodes a protein with an A/B barrel domain found in variable enzymes, which hampers functional prediction. The chain is Cytochrome P450 monooxygenase FGSG_08207 from Gibberella zeae (strain ATCC MYA-4620 / CBS 123657 / FGSC 9075 / NRRL 31084 / PH-1) (Wheat head blight fungus).